An 801-amino-acid polypeptide reads, in one-letter code: uncharacterized protein (801 aa).

A PE domain is found at 1–93; the sequence is MSWVMVSPEL…GGAYAAAEAA (93 aa).

This sequence belongs to the mycobacterial PE family. PGRS subfamily.

This is an uncharacterized protein from Mycobacterium tuberculosis (strain ATCC 25618 / H37Rv).